The sequence spans 22 residues: Motilin (22 aa).

Positions 1 to 22 (FVPIFTHSELQKIREKERNKGQ) are disordered. Basic and acidic residues predominate over residues 9-22 (ELQKIREKERNKGQ).

This sequence belongs to the motilin family.

It localises to the secreted. Its function is as follows. Plays an important role in the regulation of interdigestive gastrointestinal motility and indirectly causes rhythmic contraction of duodenal and colonic smooth muscle. This Canis lupus familiaris (Dog) protein is Motilin (MLN).